The chain runs to 830 residues: Nucleolar complex-associated protein 3 (830 aa).

Disordered stretches follow at residues 1–22 (MGKN…DVAE), 67–86 (KYEE…GNGE), 112–169 (KSKL…EETP), 391–436 (GKPN…KIRD), and 802–830 (LQSE…KKQI). Coiled coils occupy residues 61–81 (VMTV…LQEE) and 111–156 (KKSK…HEKD). Basic and acidic residues predominate over residues 67–84 (KYEEERSKRKTLQEEKGN). The segment covering 118 to 129 (AETDEAEKDVLE) has biased composition (acidic residues). Positions 130–140 (DEHVLNKSQRR) are enriched in basic and acidic residues. Positions 138–145 (QRREKAKK) match the Nuclear localization signal 1 motif. Residues 141–150 (EKAKKSKREA) are compositionally biased toward basic residues. Positions 159–168 (DEILQEEEET) are enriched in acidic residues. Positions 391-400 (GKPNKEDEHN) are enriched in basic and acidic residues. A coiled-coil region spans residues 400–429 (NKKYKKNNKRKTQEEQNQVQENERKKSKKD). The Nuclear localization signal 2 motif lies at 408 to 415 (KRKTQEEQ). Residues 420–436 (ENERKKSKKDMMSKIRD) are compositionally biased toward basic and acidic residues. A Nuclear localization signal 3 motif is present at residues 806–813 (EKKPLKKQ). Over residues 817-830 (VKKKLKNPKSKKQI) the composition is skewed to basic residues.

It belongs to the CBF/MAK21 family. In terms of assembly, component of nucleolar complexes. Interacts with RBL and NOC2 in both the nucleolus and nucleoplasm.

Its subcellular location is the nucleus. The protein resides in the nucleolus. The protein localises to the nucleoplasm. In terms of biological role, may be required for synthesis of 60S ribosomal subunits and the transport of pre-ribosomes from the nucleoplasm to the cytoplasm. Also required for initiation of DNA replication. The protein is Nucleolar complex-associated protein 3 of Arabidopsis thaliana (Mouse-ear cress).